The primary structure comprises 376 residues: Putative glutamate--cysteine ligase 2-1 (376 aa).

This sequence belongs to the glutamate--cysteine ligase type 2 family. YbdK subfamily.

The catalysed reaction is L-cysteine + L-glutamate + ATP = gamma-L-glutamyl-L-cysteine + ADP + phosphate + H(+). Its function is as follows. ATP-dependent carboxylate-amine ligase which exhibits weak glutamate--cysteine ligase activity. This Mycolicibacterium smegmatis (strain ATCC 700084 / mc(2)155) (Mycobacterium smegmatis) protein is Putative glutamate--cysteine ligase 2-1.